Here is a 325-residue protein sequence, read N- to C-terminus: GMP reductase (325 aa).

Cys173 functions as the Thioimidate intermediate in the catalytic mechanism. 202 to 225 contacts NADP(+); the sequence is IIADGGIRSHGDIAKSVRFGATMV.

It belongs to the IMPDH/GMPR family. GuaC type 2 subfamily.

It catalyses the reaction IMP + NH4(+) + NADP(+) = GMP + NADPH + 2 H(+). In terms of biological role, catalyzes the irreversible NADPH-dependent deamination of GMP to IMP. It functions in the conversion of nucleobase, nucleoside and nucleotide derivatives of G to A nucleotides, and in maintaining the intracellular balance of A and G nucleotides. This chain is GMP reductase, found in Delftia acidovorans (strain DSM 14801 / SPH-1).